Consider the following 203-residue polypeptide: Dephospho-CoA kinase (203 aa).

One can recognise a DPCK domain in the interval 6–203; it reads KVAITGGLSC…ELYQELKIYI (198 aa). Residue 14–19 participates in ATP binding; the sequence is SCGKSS.

The protein belongs to the CoaE family.

It is found in the cytoplasm. The enzyme catalyses 3'-dephospho-CoA + ATP = ADP + CoA + H(+). Its pathway is cofactor biosynthesis; coenzyme A biosynthesis; CoA from (R)-pantothenate: step 5/5. Its function is as follows. Catalyzes the phosphorylation of the 3'-hydroxyl group of dephosphocoenzyme A to form coenzyme A. The chain is Dephospho-CoA kinase from Protochlamydia amoebophila (strain UWE25).